A 30-amino-acid chain; its full sequence is Mejucin (30 aa).

Its subcellular location is the secreted. In terms of biological role, bacteriocin that inhibits the growth of several Gram-positive bacteria, especially the food-borne pathogens L.monocytogenes, B.cereus strain ATCC 11778, B.cereus strain ATCC 21366, B.cereus strain ATCC 10876 and B.cereus strain ATCC 14579. Likely to act by disrupting the pathogen membrane resulting in leakage of intracellular constituents. Does not inhibit the growth of Gram-negative bacteria. In Bacillus subtilis, this protein is Mejucin.